The sequence spans 738 residues: Flagellar radial spoke protein 2 (738 aa).

An Asymmetric dimethylarginine modification is found at arginine 104. Acidic residues-rich tracts occupy residues 134–153 and 161–182; these read PDWV…EDEA and EGEE…DGEG. A disordered region spans residues 134–189; sequence PDWVAPEDDEAAAVETEDEAAGGAALAEGEEPPPEPEPEPEAAPEDGEGDAPAPKI. Asymmetric dimethylarginine is present on arginine 260. The disordered stretch occupies residues 357 to 426; the sequence is AAAEAAAAAP…PPKPKKKKKV (70 aa). Residues 371 to 415 show a composition bias toward acidic residues; sequence EGEEGEGEAPPAEEEPPAEEEAEEEEEEAEEGAEEGAEEGEEGEE. Asymmetric dimethylarginine is present on residues arginine 453, arginine 538, and arginine 615. The segment at 674 to 738 is disordered; it reads AEAGEGEAVA…SSEESKAAAE (65 aa). Over residues 689 to 730 the composition is skewed to low complexity; that stretch reads PAEAEAAPAEGEAAPPAEGEGEAQPAQEGSNSSSSSSDSSSS.

The protein belongs to the dpy-30 family. Asymmetrically dimethylated at Arg-104, Arg-260, Arg-453, Arg-538 and Arg-615 during flagellum resorption. Probably methylated by PRMT1.

It localises to the cytoplasm. The protein localises to the cytoskeleton. Its subcellular location is the flagellum axoneme. Flagellar radial spokes contribute to the regulation of dynein arm activity and thus the pattern of flagellar bending. They consist of a thin stalk, which is attached to the a subfiber of the outer doublet microtubule, and a bulbous head, which is attached to the stalk and appears to interact with the projections from the central pair of microtubules. Binds calmodulin in a calcium-dependent manner. The sequence is that of Flagellar radial spoke protein 2 from Chlamydomonas reinhardtii (Chlamydomonas smithii).